A 260-amino-acid chain; its full sequence is Emerin (260 aa).

Met1 carries the N-acetylmethionine modification. Positions 1–45 constitute an LEM domain; the sequence is MDDYAVLSDTELAAVLRQYNIPHGPILGSTRKLYEKKIFEYETQR. A phosphoserine mark is found at Ser8 and Ser29. The interval 46–224 is interaction with F-actin; that stretch reads RRLSPPSSSS…PTAALGQDRQ (179 aa). Ser49 bears the Phosphoserine; by PKA mark. 8 positions are modified to phosphoserine: Ser54, Ser69, Ser72, Ser88, Ser99, Ser142, Ser143, and Ser144. Residue Tyr162 is modified to Phosphotyrosine. Residues 169-188 are interaction with CTNNB1; that stretch reads RPISNVSRSSLGLSYYPRSS. Ser172, Ser175, and Ser177 each carry phosphoserine. A disordered region spans residues 184–206; it reads YPRSSTSSVSSSSSSPSSWLTRR. The span at 187-201 shows a compositional bias: low complexity; it reads SSTSSVSSSSSSPSS. Residues 225–245 traverse the membrane as a helical segment; that stretch reads VPLWGQLLLFLAFATFLLFVY.

Interacts with lamins A and C, BANF1, GMCL, BCLAF1 and YTHDC1/YT521. Interacts with TMEM43; the interaction retains emerin in the inner nuclear membrane. Interacts with ACTB, SPTAN1, F-actin, CTNNB1 and beta-tubulin. Interacts with SUN1 and SUN2. Interacts with TMEM201. Interacts with NEMP1.

It is found in the nucleus inner membrane. The protein localises to the nucleus outer membrane. Stabilizes and promotes the formation of a nuclear actin cortical network. Stimulates actin polymerization in vitro by binding and stabilizing the pointed end of growing filaments. Inhibits beta-catenin activity by preventing its accumulation in the nucleus. Acts by influencing the nuclear accumulation of beta-catenin through a CRM1-dependent export pathway. Links centrosomes to the nuclear envelope via a microtubule association. Required for proper localization of non-farnesylated prelamin-A/C. Together with NEMP1, contributes to nuclear envelope stiffness in germ cells. In Rattus norvegicus (Rat), this protein is Emerin (Emd).